We begin with the raw amino-acid sequence, 664 residues long: Protein-arginine deiminase type-3 (664 aa).

Belongs to the protein arginine deiminase family. Ca(2+) is required as a cofactor. Epidermis and hair follicles.

It localises to the cytoplasm. It catalyses the reaction L-arginyl-[protein] + H2O = L-citrullyl-[protein] + NH4(+). Catalyzes the deimination of arginine residues of proteins. In Mus musculus (Mouse), this protein is Protein-arginine deiminase type-3 (Padi3).